Reading from the N-terminus, the 26-residue chain is Phospholipase A2 homolog A1 (26 aa).

In terms of processing, contains 7 disulfide bonds. Expressed by the venom gland.

It localises to the secreted. This is Phospholipase A2 homolog A1 from Micrurus pyrrhocryptus (Coral snake).